The sequence spans 407 residues: Argininosuccinate synthase (407 aa).

ATP contacts are provided by residues 11–19 (AYSGGLDTS) and A39. The L-citrulline site is built by Y90 and S95. G120 serves as a coordination point for ATP. L-aspartate is bound by residues T122, N126, and D127. An L-citrulline-binding site is contributed by N126. Residues R130, S179, S188, E264, and Y276 each contribute to the L-citrulline site.

It belongs to the argininosuccinate synthase family. Type 1 subfamily. As to quaternary structure, homotetramer.

The protein resides in the cytoplasm. The catalysed reaction is L-citrulline + L-aspartate + ATP = 2-(N(omega)-L-arginino)succinate + AMP + diphosphate + H(+). It participates in amino-acid biosynthesis; L-arginine biosynthesis; L-arginine from L-ornithine and carbamoyl phosphate: step 2/3. The protein is Argininosuccinate synthase of Roseiflexus sp. (strain RS-1).